We begin with the raw amino-acid sequence, 392 residues long: L-rhamnonate dehydratase (392 aa).

Substrate contacts are provided by His22 and Arg48. 3 residues coordinate Mg(2+): Asp214, Glu240, and Glu268. The active-site Proton acceptor is His318. A substrate-binding site is contributed by Glu338.

This sequence belongs to the mandelate racemase/muconate lactonizing enzyme family. RhamD subfamily. In terms of assembly, homooctamer; tetramer of dimers. Mg(2+) serves as cofactor.

The enzyme catalyses L-rhamnonate = 2-dehydro-3-deoxy-L-rhamnonate + H2O. Its function is as follows. Catalyzes the dehydration of L-rhamnonate to 2-keto-3-deoxy-L-rhamnonate (KDR). This chain is L-rhamnonate dehydratase, found in Burkholderia cenocepacia (strain HI2424).